The sequence spans 302 residues: MIALLAPGQGSQTEGMLSPWLQLPGAADQIAAWSKAADLDLARLGTTASTEEITDTAVAQPLIVAATLLAHQELARRCVLAGKDVIVAGHSVGEIAAYAIAGVIAADDAVALAATRGAEMAKACATEPTGMSAVLGGDETEVLSRLEQLDLVPANRNAAGQIVAAGRLTALEKLAEDPPAKARVRALGVAGAFHTEFMAPALDGFAAAAANIATADPTATLLSNRDGKPVTSAAAAMDTLVSQLTQPVRWDLCTATLREHTVTAIVEFPPAGTLSGIAKRELRGVPARAVKSPADLDELANL.

Catalysis depends on residues serine 91 and histidine 194.

Belongs to the FabD family.

The catalysed reaction is holo-[ACP] + malonyl-CoA = malonyl-[ACP] + CoA. Its pathway is lipid metabolism; fatty acid biosynthesis. The sequence is that of Malonyl CoA-acyl carrier protein transacylase (fabD) from Mycobacterium bovis (strain ATCC BAA-935 / AF2122/97).